We begin with the raw amino-acid sequence, 364 residues long: Apelin receptor (364 aa).

Residues 1–39 (MATDEFSSSTTPSYDYYDYTNESGLPPCDETDWDLSYSL) are Extracellular-facing. An N-linked (GlcNAc...) asparagine glycan is attached at Asn21. 2 disulfides stabilise this stretch: Cys28/Cys288 and Cys110/Cys187. The chain crosses the membrane as a helical span at residues 40–60 (LPVFYMIVFVLGLSGNGVVIF). Residues 61–78 (TVWKAKPKRRSADTYIGN) lie on the Cytoplasmic side of the membrane. The helical transmembrane segment at 79-99 (LALADLAFVVTLPLWATYTAL) threads the bilayer. The Extracellular segment spans residues 100 to 112 (GFHWPFGSALCKL). Residues 113-133 (SSYLVLLNMFASVFCLTCLSF) traverse the membrane as a helical segment. Over 134 to 153 (DRYLAIVHSLSSAKLRSRSS) the chain is Cytoplasmic. The chain crosses the membrane as a helical span at residues 154–174 (ILVSLAVIWLFSGLLALPSLI). Over 175-201 (LRDTRVEGNNTICDLDFSGVSSKENEN) the chain is Extracellular. Asn183 carries N-linked (GlcNAc...) asparagine glycosylation. A helical transmembrane segment spans residues 202-222 (FWIGGLSILTTVPGFLLPLLL). Topologically, residues 223–250 (MTIFYCFIGGKVTMHFQNLKKEEQKKKR) are cytoplasmic. The chain crosses the membrane as a helical span at residues 251 to 271 (LLKIIITLVVVFAICWLPFHI). The Extracellular portion of the chain corresponds to 272-298 (LKTIHFLDLMGFLELSCSTQNIIVSLH). The helical transmembrane segment at 299-319 (PYATCLAYINSCLNPFLYAFF) threads the bilayer. The Cytoplasmic segment spans residues 320–364 (DLRFRSQCFFFFGFKKALQGHLSNTSSSLSAQTQKSEIHSLATKV).

Belongs to the G-protein coupled receptor 1 family.

It is found in the cell membrane. Its function is as follows. G protein-coupled receptor for peptide hormones apelin (apln) and apelin receptor early endogenous ligand (apela), that plays a role in the regulation of normal cardiovascular function and fluid homeostasis. When acting as apelin receptor, activates both G(i) protein pathway that inhibits adenylate cyclase activity, and the beta-arrestin pathway that promotes internalization of the receptor. Also functions as mechanoreceptor that is activated by pathological stimuli in a G-protein-independent fashion to induce beta-arrestin signaling, hence eliciting cardiac hypertrophy. However, the presence of apelin ligand blunts cardiac hypertrophic induction from APLNR/APJ on response to pathological stimuli. Plays a key role in early development such as gastrulation, blood vessels formation and heart morphogenesis by acting as a receptor for apela hormone, promoting endoderm and mesendoderm cell migration and regulating the migration of cells fated to become myocardial progenitors, respectively. Promotes angioblast migration toward the embryonic midline, i.e. the position of the future vessel formation, during vasculogenesis. May promote sinus venosus (SV)-derived endothelial cells migration into the developing heart to promote coronary blood vessel development. Required for cardiovascular development, particularly for intersomitic vein angiogenesis. Plays also a role in various processes in adults such as regulation of blood vessel formation, blood pressure, heart contractility, and heart failure. Acts upstream of the i/o type of G-alpha proteins in the differentiation of endothelium, erythroid cells, myeloid cells and cardiomyocytes. The chain is Apelin receptor (aplnr) from Xenopus tropicalis (Western clawed frog).